The sequence spans 244 residues: Phosphoadenosine 5'-phosphosulfate reductase (244 aa).

Residue C239 is the Nucleophile; cysteine thiosulfonate intermediate of the active site.

It belongs to the PAPS reductase family. CysH subfamily.

It localises to the cytoplasm. It carries out the reaction [thioredoxin]-disulfide + sulfite + adenosine 3',5'-bisphosphate + 2 H(+) = [thioredoxin]-dithiol + 3'-phosphoadenylyl sulfate. Its pathway is sulfur metabolism; hydrogen sulfide biosynthesis; sulfite from sulfate: step 3/3. Catalyzes the formation of sulfite from phosphoadenosine 5'-phosphosulfate (PAPS) using thioredoxin as an electron donor. The polypeptide is Phosphoadenosine 5'-phosphosulfate reductase (Enterobacter sp. (strain 638)).